The primary structure comprises 295 residues: Ubiquinol-cytochrome c reductase complex assembly factor 1 (295 aa).

Belongs to the CBP3 family. Interacts with UQCC2. Interacts with UQCC3. Forms a complex, named COMB/coordinator of mitochondrial CYTB biogenesis, composed of UQCC1, UQCC2, UQCC4, UQCC5 and UQCC6; stabilizes nascent cytochrome b/MT-CYB and promotes its membrane insertion. Forms a complex, named COMA, composed of UQCC1, UQCC2 and UQCC4; activates MT-CYB translation. Forms a complex, named COMC, composed of UQCC1, UQCC2; UQCC3 and UQCC4; mediates MT-CYB hemylation and association with the first nuclear-encoded CIII subunit UQCRQ. As to expression, in the brain it is restricted to the olfactory bulb, the hippocampus, the piriform cortex and the Purkinje cells.

The protein resides in the mitochondrion inner membrane. It localises to the cytoplasmic vesicle. Its function is as follows. Required for the assembly of the ubiquinol-cytochrome c reductase complex (mitochondrial respiratory chain complex III or cytochrome b-c1 complex). Involved in cytochrome b translation and/or stability. This Mus musculus (Mouse) protein is Ubiquinol-cytochrome c reductase complex assembly factor 1 (Uqcc1).